The chain runs to 3423 residues: Genome polyprotein (3423 aa).

The interval 1–25 is disordered; that stretch reads MKNPKKKSGGFRIVNMLKRGVARVS. Over 1–104 the chain is Cytoplasmic; the sequence is MKNPKKKSGG…INARKEKKRR (104 aa). The interval 37–72 is hydrophobic; homodimerization of capsid protein C; it reads LLLGHGPIRMVLAILAFLRFTAIKPSLGLINRWGSV. Positions 105–122 are cleaved as a propeptide — ER anchor for capsid protein C, removed in mature form by serine protease NS3; sequence GADTSVGIVGLLLTTAMA. A helical membrane pass occupies residues 105 to 125; that stretch reads GADTSVGIVGLLLTTAMAAEV. The Extracellular portion of the chain corresponds to 126–249; the sequence is TRRGSAYYMY…YTKHLIRVEN (124 aa). The N-linked (GlcNAc...) asparagine; by host glycan is linked to Asn192. The helical transmembrane segment at 250–269 threads the bilayer; the sequence is WIFRNPGFALAAAAIAWLLG. Residues 270–274 lie on the Cytoplasmic side of the membrane; the sequence is SSTSQ. The chain crosses the membrane as a helical span at residues 275–290; sequence KVIYLVMILLIAPAYS. Topologically, residues 291–745 are extracellular; that stretch reads IRCIGVSNRD…HQIFGAAFKS (455 aa). Lys328 is covalently cross-linked (Glycyl lysine isopeptide (Lys-Gly) (interchain with G-Cter in ubiquitin)). Cystine bridges form between Cys350–Cys406 and Cys382–Cys411. The segment at 388–401 is fusion peptide; that stretch reads DRGWGNGCGLFGKG. N-linked (GlcNAc...) asparagine; by host glycosylation is present at Asn444. Cystine bridges form between Cys480-Cys581 and Cys598-Cys629. Lys571 is covalently cross-linked (Glycyl lysine isopeptide (Lys-Gly) (interchain with G-Cter in ubiquitin)). Residues 746-767 form a helical membrane-spanning segment; that stretch reads LFGGMSWFSQILIGTLLMWLGL. Over 768–773 the chain is Cytoplasmic; it reads NTKNGS. A helical transmembrane segment spans residues 774–794; that stretch reads ISLMCLALGGVLIFLSTAVSA. Over 795 to 1177 the chain is Lumenal; the sequence is DVGCSVDFSK…EGLKKRMTTK (383 aa). 6 cysteine pairs are disulfide-bonded: Cys798-Cys809, Cys849-Cys937, Cys973-Cys1017, Cys1074-Cys1123, Cys1085-Cys1106, and Cys1107-Cys1110. 2 N-linked (GlcNAc...) asparagine; by host glycosylation sites follow: Asn924 and Asn1001. A helical membrane pass occupies residues 1178 to 1198; sequence IIISTSMAVLVAMILGGFSMS. Topologically, residues 1199–1220 are cytoplasmic; it reads DLAKLAILMGATFAEMNTGGDV. The chain crosses the membrane as a helical span at residues 1221 to 1241; it reads AHLALIAAFKVRPALLVSFIF. The Lumenal segment spans residues 1242 to 1270; that stretch reads RANWTPRESMLLALASCLLQTAISALEGD. Residues 1271-1291 traverse the membrane as a helical segment; sequence LMVLINGFALAWLAIRAMVVP. Residues 1292 to 1295 lie on the Cytoplasmic side of the membrane; that stretch reads RTDN. A helical membrane pass occupies residues 1296–1316; that stretch reads ITLAILAALTPLARGTLLVAW. Residues 1317 to 1345 lie on the Lumenal side of the membrane; sequence RAGLATCGGFMLLSLKGKGSVKKNLPFVM. Residues 1346–1366 traverse the membrane as a helical segment; the sequence is ALGLTAVRLVDPINVVGLLLL. Residues 1367-1373 lie on the Cytoplasmic side of the membrane; that stretch reads TRSGKRS. A helical transmembrane segment spans residues 1374–1394; that stretch reads WPPSEVLTAVGLICALAGGFA. The Lumenal segment spans residues 1395-1397; it reads KAD. A helical transmembrane segment spans residues 1398 to 1418; sequence IEMAGPMAAVGLLIVSYVVSG. Topologically, residues 1419 to 1472 are cytoplasmic; the sequence is KSVDMYIERAGDITWEKDAEVTGNSPRLDVALDESGDFSLVEDDGPPMREIILK. The segment at 1425–1464 is interacts with and activates NS3 protease; that stretch reads IERAGDITWEKDAEVTGNSPRLDVALDESGDFSLVEDDGP. Residues 1429–1451 form a disordered region; sequence GDITWEKDAEVTGNSPRLDVALD. The segment at residues 1473-1493 is an intramembrane region (helical); the sequence is VVLMTICGMNPIAIPFAAGAW. The Lumenal segment spans residues 1494–2170; sequence YVYVKTGKRS…KAAAAQLPET (677 aa). Residues 1503-1680 enclose the Peptidase S7 domain; the sequence is SGALWDVPAP…RREEETPVEC (178 aa). Active-site charge relay system; for serine protease NS3 activity residues include His1553, Asp1577, and Ser1637. In terms of domain architecture, Helicase ATP-binding spans 1683–1839; sequence PSMLKKKQLT…DSNSPIMDTE (157 aa). Residues 1687–1690 are important for RNA-binding; sequence KKKQ. 1696 to 1703 contacts ATP; that stretch reads LHPGAGKT. Positions 1787–1790 match the DEAH box motif; that stretch reads DEAH. The 180-residue stretch at 1834–2013 folds into the Helicase C-terminal domain; it reads PIMDTEVEVP…GLIASLYRPE (180 aa). N6-acetyllysine; by host is present on Lys1891. A helical membrane pass occupies residues 2171-2191; the sequence is LETIMLLGLLGTVSLGIFFVL. Over 2192–2195 the chain is Lumenal; sequence MRNK. Residues 2196-2216 constitute an intramembrane region (helical); that stretch reads GIGKMGFGMVTLGASAWLMWL. Residues 2217 to 2218 are Cytoplasmic-facing; it reads SE. Residues 2219 to 2239 form a helical membrane-spanning segment; the sequence is IEPARIACVLIVVFLLLVVLI. Residues 2240 to 2254 lie on the Lumenal side of the membrane; that stretch reads PEPEKQRSPQDNQMA. The helical intramembrane region spans 2255 to 2269; it reads IIIMVAVGLLGLITA. The Lumenal portion of the chain corresponds to 2270–2307; that stretch reads NELGWLERTKSDLSHLMGRREEGATIGFSMDIDLRPAS. The helical intramembrane region spans 2308-2328; it reads AWAIYAALTTFITPAVQHAVT. At 2329 to 2344 the chain is on the lumenal side; that stretch reads TSYNNYSLMAMATQAG. The chain crosses the membrane as a helical span at residues 2345–2365; the sequence is VLFGMGKGMPFYAWDFGVPLL. Topologically, residues 2366–2375 are cytoplasmic; that stretch reads MIGCYSQLTP. Residues 2376–2396 traverse the membrane as a helical segment; the sequence is LTLIVAIILLVAHYMYLIPGL. Over 2397–2441 the chain is Lumenal; sequence QAAAARAAQKRTAAGIMKNPVVDGIVVTDIDTMTIDPQVEKKMGQ. A helical membrane pass occupies residues 2442–2462; that stretch reads VLLIAVAVSSAILSRTAWGWG. Topologically, residues 2463–3423 are cytoplasmic; it reads EAGALITAAT…GEEGSTPGVL (961 aa). An mRNA cap 0-1 NS5-type MT domain is found at 2521–2785; sequence GGGTGETLGE…DVNLGSGTRA (265 aa). 2533 to 2539 serves as a coordination point for GTP; that stretch reads KARLNQM. Ser2576 is an S-adenosyl-L-methionine binding site. Residue Ser2576 is modified to Phosphoserine. The active-site For 2'-O-MTase activity is the Lys2581. An SUMO-interacting motif (SIM) region spans residues 2597–2600; the sequence is VIDL. 10 residues coordinate S-adenosyl-L-methionine: Gly2606, Trp2607, Thr2624, Lys2625, His2630, Glu2631, Asp2651, Val2652, Asp2666, and Ile2667. Asp2666 serves as the catalytic For 2'-O-MTase activity. Residue 2669–2675 coordinates GTP; sequence ESSSSPE. The active-site For 2'-O-MTase activity is Lys2702. 2733–2735 lines the GTP pocket; it reads RNS. The active-site For 2'-O-MTase activity is Glu2738. Tyr2740 provides a ligand contact to S-adenosyl-L-methionine. A Nuclear localization signal (NLS) motif is present at residues 2908-2914; that stretch reads KHKRPRV. Residues Glu2959, His2963, Cys2968, and Cys2971 each coordinate Zn(2+). One can recognise a RdRp catalytic domain in the interval 3049–3199; the sequence is GRMYADDTAG…KPIDDRFAHA (151 aa). Zn(2+) contacts are provided by His3234, Cys3250, and Cys3369.

This sequence in the N-terminal section; belongs to the class I-like SAM-binding methyltransferase superfamily. mRNA cap 0-1 NS5-type methyltransferase family. As to quaternary structure, homodimer. Interacts with host SERTAD3; this interaction promotes capsid protein C degradation. Interacts with host CAPRIN1; this interaction is probably linked to the inhibition of stress granules formation by the virus. Interacts with host G3BP1; this interaction is probably linked to the inhibition of stress granules formation by the virus. Forms heterodimers with envelope protein E in the endoplasmic reticulum and Golgi. Interacts with non-structural protein 2A. In terms of assembly, homodimer; in the endoplasmic reticulum and Golgi. Interacts with host TYRO3, AXL and DC-SIGN proteins. Interacts with non-structural protein 2A. Interacts with host HAVCR1; this interaction likely mediates virus attachment to host cell. Interacts with host NCAM1. Interacts with host HSPA5. Interacts with Aedes aegypti SRPN25, APY and venom allergen-1 salivary proteins; the interactions do not affect Zika virus replication in human endothelial cells and keratinocytes. As to quaternary structure, homodimer; Homohexamer when secreted. Interacts with host TBK1. Interacts with host USP8. Interacts with envelope protein E. Interacts with the structural protein prM/E complex, and the NS2B/NS3 protease complex. In terms of assembly, forms a heterodimer with serine protease NS3. May form homooligomers. Interacts with human SPCS1. Interacts with non-structural protein 2A. As to quaternary structure, forms a heterodimer with NS2B. Interacts with NS4B. Interacts with unphosphorylated RNA-directed RNA polymerase NS5; this interaction stimulates RNA-directed RNA polymerase NS5 guanylyltransferase activity. Interacts with non-structural protein 2A. Interacts with host SHFL; this interaction promotes NS3 degradation via a lysosome-dependent pathway. Interacts with host CEP63; this interaction disorganizes the centrosome and inhibits host innate immune response. May interact with host ANKLE2; the interaction may cause defects in brain development, such as microcephaly. May interact with host SRPRA and SEC61G. In terms of assembly, interacts with serine protease NS3. Interacts with NS1. As to quaternary structure, homodimer; dimerization may negatively regulate the GTase activity, a crucial step in the capping process. Interacts with host STAT2; this interaction inhibits the phosphorylation of the latter, and, when all viral proteins are present (polyprotein), targets STAT2 for degradation. Interacts with host TBK1 and IKBKE; these interactions lead to the inhibition of the host RIG-I signaling pathway. Interacts with host PAF1 complex; the interaction may prevent the recruitment of the host PAF1 complex to interferon-responsive genes, and thus reduces the immune response. Interacts with serine protease NS3. Interacts with host KPNA2. Interacts with host ZSWIM8; this interaction allows STAT2 binding to ZSWIM8 and subsequent proteasomal degradation leading to inhibition of interferon signaling. Post-translationally, specific enzymatic cleavages in vivo yield mature proteins. Cleavages in the lumen of endoplasmic reticulum are performed by host signal peptidase, whereas cleavages in the cytoplasmic side are performed by serine protease NS3. Signal cleavage at the 2K-4B site requires a prior NS3 protease-mediated cleavage at the 4A-2K site. Cleaved in post-Golgi vesicles by a host furin, releasing the mature small envelope protein M, and peptide pr. This cleavage is incomplete as up to 30% of viral particles still carry uncleaved prM. In terms of processing, N-glycosylation plays a role in virulence in mammalian and mosquito hosts, but may have no effect on neurovirulence. Post-translationally, ubiquitination by host TRIM7 promotes virus attachment and fusion of the virus and the host endosome membrane. N-glycosylated. The excreted form is glycosylated, which is required for efficient secretion of the protein from infected cells. In terms of processing, ubiquitination by host TRIM22 leads to proteasomal degradation. Post-translationally, acetylated by host KAT5. Acetylation modulates NS3 RNA-binding and unwinding activities and plays an important positive role for viral replication. Phosphorylated on serines residues. This phosphorylation may trigger NS5 nuclear localization. In terms of processing, sumoylated, required for regulating IFN induced interferon stimulated genes/ISGs.

It localises to the virion. The protein resides in the host nucleus. Its subcellular location is the host cytoplasm. The protein localises to the host perinuclear region. It is found in the secreted. It localises to the virion membrane. The protein resides in the host endoplasmic reticulum membrane. The catalysed reaction is a 5'-end (5'-triphosphoguanosine)-ribonucleoside in mRNA + S-adenosyl-L-methionine = a 5'-end (N(7)-methyl 5'-triphosphoguanosine)-ribonucleoside in mRNA + S-adenosyl-L-homocysteine. It carries out the reaction a 5'-end (N(7)-methyl 5'-triphosphoguanosine)-ribonucleoside in mRNA + S-adenosyl-L-methionine = a 5'-end (N(7)-methyl 5'-triphosphoguanosine)-(2'-O-methyl-ribonucleoside) in mRNA + S-adenosyl-L-homocysteine + H(+). The enzyme catalyses RNA(n) + a ribonucleoside 5'-triphosphate = RNA(n+1) + diphosphate. It catalyses the reaction Selective hydrolysis of -Xaa-Xaa-|-Yaa- bonds in which each of the Xaa can be either Arg or Lys and Yaa can be either Ser or Ala.. The catalysed reaction is a ribonucleoside 5'-triphosphate + H2O = a ribonucleoside 5'-diphosphate + phosphate + H(+). It carries out the reaction ATP + H2O = ADP + phosphate + H(+). In terms of biological role, plays a role in virus budding by binding to the cell membrane and gathering the viral RNA into a nucleocapsid that forms the core of the mature virus particle. During virus entry, may induce genome penetration into the host cytoplasm after hemifusion induced by the surface proteins. Can migrate to the cell nucleus where it modulates host functions. Inhibits the integrated stress response (ISR) in the infected cell. Functionally, inhibits RNA silencing by interfering with host Dicer. Prevents premature fusion activity of envelope proteins in trans-Golgi by binding to envelope protein E at pH 6.0. After virion release in extracellular space, gets dissociated from E dimers. Its function is as follows. Plays a role in host immune defense modulation and protection of envelope protein E during virion synthesis. PrM-E cleavage is inefficient, many virions are only partially matured and immature prM-E proteins could play a role in immune evasion. Contributes to fetal microcephaly in humans. Acts as a chaperone for envelope protein E during intracellular virion assembly by masking and inactivating envelope protein E fusion peptide. prM is the only viral peptide matured by host furin in the trans-Golgi network probably to avoid catastrophic activation of the viral fusion activity in acidic Golgi compartment prior to virion release. In terms of biological role, may play a role in virus budding. Exerts cytotoxic effects by activating a mitochondrial apoptotic pathway through M ectodomain. May display a viroporin activity. Functionally, binds to host cell surface receptors and mediates fusion between viral and cellular membranes. Efficient virus attachment to cell is, at least in part, mediated by host HAVCR1 in a cell-type specific manner. In addition, host NCAM1 can also be used as entry receptor. Interaction with host HSPA5 plays an important role in the early stages of infection as well. Envelope protein is synthesized in the endoplasmic reticulum and forms a heterodimer with protein prM. The heterodimer plays a role in virion budding in the ER, and the newly formed immature particle is covered with 60 spikes composed of heterodimers between precursor prM and envelope protein E. The virion is transported to the Golgi apparatus where the low pH causes the dissociation of PrM-E heterodimers and formation of E homodimers. PrM-E cleavage is inefficient, many virions are only partially matured and immature prM-E proteins could play a role in immune evasion. Plays a role in the inhibition of host RLR-induced interferon-beta activation by targeting TANK-binding kinase 1/TBK1. In addition, recruits the host deubiquitinase USP8 to cleave 'Lys-11'-linked polyubiquitin chains from caspase-1/CASP1 thus inhibiting its proteasomal degradation. In turn, stabilized CASP1 promotes cleavage of cGAS, which inhibits its ability to recognize mitochondrial DNA release and initiate type I interferon signaling. Its function is as follows. Component of the viral RNA replication complex that recruits genomic RNA, the structural protein prM/E complex, and the NS2B/NS3 protease complex to the virion assembly site and orchestrates virus morphogenesis. Antagonizes also the host MDA5-mediated induction of alpha/beta interferon antiviral response. May disrupt adherens junction formation and thereby impair proliferation of radial cells in the host cortex. In terms of biological role, required cofactor for the serine protease function of NS3. Functionally, displays three enzymatic activities: serine protease, NTPase and RNA helicase. NS3 serine protease, in association with NS2B, performs its autocleavage and cleaves the polyprotein at dibasic sites in the cytoplasm: C-prM, NS2A-NS2B, NS2B-NS3, NS3-NS4A, NS4A-2K and NS4B-NS5. NS3 RNA helicase binds RNA and unwinds dsRNA in the 3' to 5' direction. Inhibits the integrated stress response (ISR) in the infected cell by blocking stress granules assembly. Disrupts host centrosome organization in a CEP63-dependent manner to degrade host TBK1 and inhibits innate immune response. Regulates the ATPase activity of the NS3 helicase activity. NS4A allows NS3 helicase to conserve energy during unwinding. Cooperatively with NS4B suppresses the Akt-mTOR pathway and leads to cellular dysregulation. By inhibiting host ANKLE2 functions, may cause defects in brain development, such as microcephaly. Also antagonizes the host MDA5-mediated induction of alpha/beta interferon antiviral response. Inhibits the integrated stress response (ISR) in the infected cell by blocking stress granules assembly. Its function is as follows. Functions as a signal peptide for NS4B and is required for the interferon antagonism activity of the latter. In terms of biological role, induces the formation of ER-derived membrane vesicles where the viral replication takes place. Also plays a role in the inhibition of host RLR-induced interferon-beta production at TANK-binding kinase 1/TBK1 level. Cooperatively with NS4A suppresses the Akt-mTOR pathway and leads to cellular dysregulation. Functionally, replicates the viral (+) and (-) RNA genome, and performs the capping of genomes in the cytoplasm. Methylates viral RNA cap at guanine N-7 and ribose 2'-O positions. Once sufficient NS5 is expressed, binds to the cap-proximal structure and inhibits further translation of the viral genome. Besides its role in RNA genome replication, also prevents the establishment of a cellular antiviral state by blocking the interferon-alpha/beta (IFN-alpha/beta) signaling pathway. Mechanistically, interferes with host kinases TBK1 and IKKE upstream of interferon regulatory factor 3/IRF3 to inhibit the RIG-I pathway. Also antagonizes type I interferon signaling by targeting STAT2 for degradation by the proteasome thereby preventing activation of JAK-STAT signaling pathway. Mechanistically, acts as a scaffold protein to connect host ZSWIM8/CUL3 ligase complex and STAT2, leading to STAT2 degradation. Within the host nucleus, disrupts host SUMO1 and STAT2 co-localization with PML, resulting in PML degradation. May also reduce immune responses by preventing the recruitment of the host PAF1 complex to interferon-responsive genes. This Zika virus (isolate ZIKV/Human/French Polynesia/10087PF/2013) (ZIKV) protein is Genome polyprotein.